The sequence spans 227 residues: Prolactin-4A1 (227 aa).

The N-terminal stretch at 1–31 (MHLSLTPQWSSWTVLLLLVSNLLLWENTASA) is a signal peptide. Disulfide bonds link Cys-87–Cys-203 and Cys-220–Cys-227. N-linked (GlcNAc...) asparagine glycosylation is present at Asn-175.

Belongs to the somatotropin/prolactin family. As to expression, expressed specifically in placenta. Expressed in both trophoblast giant cells and spongiotrophoblast cells.

Its subcellular location is the secreted. This chain is Prolactin-4A1 (Prl4a1), found in Mus musculus (Mouse).